The primary structure comprises 366 residues: uncharacterized protein (366 aa).

This is an uncharacterized protein from Methanocaldococcus jannaschii (strain ATCC 43067 / DSM 2661 / JAL-1 / JCM 10045 / NBRC 100440) (Methanococcus jannaschii).